The following is a 1139-amino-acid chain: Liprin-alpha (1139 aa).

Coiled-coil stretches lie at residues 30 to 144 (PSDR…SLRM), 172 to 298 (EHHK…KNQI), 329 to 517 (IRDL…AQFQ), and 655 to 701 (QDAQ…EFYD). Disordered stretches follow at residues 700–720 (YDDQ…LDNM) and 764–847 (NQFD…DRRK). 2 stretches are compositionally biased toward polar residues: residues 704 to 719 (GIST…QLDN) and 778 to 787 (PASSVASSTD). 3 consecutive SAM domains span residues 867–933 (WNGP…MVSL), 952–1016 (NHEY…LKKV), and 1040–1109 (WSNE…LVND).

This sequence belongs to the liprin family. Liprin-alpha subfamily. As to expression, detected in vulval muscle and other cells near the vulva; in neurons located in the lateral ganglion, posterior ganglion, ventral cord and lateral body; and in pharyngeal and body wall muscle cells.

Its subcellular location is the synapse. In terms of biological role, may play a role in regulating the structure of the neuronal region, called the active zone, from which synaptic vesicles send neurotransmitter signals across the synapse. This may be in association with the liprin-beta protein hlb-1. In Caenorhabditis elegans, this protein is Liprin-alpha.